A 245-amino-acid polypeptide reads, in one-letter code: Carboxy-S-adenosyl-L-methionine synthase (245 aa).

Residues Tyr42, Gly67–Ser69, Asp92–Asn93, Asp120–Ile121, Asn135, and Arg202 each bind S-adenosyl-L-methionine.

Belongs to the class I-like SAM-binding methyltransferase superfamily. Cx-SAM synthase family. As to quaternary structure, homodimer.

It carries out the reaction prephenate + S-adenosyl-L-methionine = carboxy-S-adenosyl-L-methionine + 3-phenylpyruvate + H2O. In terms of biological role, catalyzes the conversion of S-adenosyl-L-methionine (SAM) to carboxy-S-adenosyl-L-methionine (Cx-SAM). The sequence is that of Carboxy-S-adenosyl-L-methionine synthase from Vibrio vulnificus (strain YJ016).